Consider the following 155-residue polypeptide: MLLRKYLLVTESQVSKCGFLIVKKKRDVLYPKRTKYSKYRKGRCSRGCKPDGTQLGFGRYGTKSCRAGRLSYRAIEAARRAIIGHFHRAMSGQFRRNGKIWVRVLADIPITGKPTEVRMGRGKGNPTGWIARVSRGQILFEMDGVSLSNARQALH.

Belongs to the universal ribosomal protein uL16 family.

The protein localises to the mitochondrion. The protein is Large ribosomal subunit protein uL16m (RPL16) of Petunia hybrida (Petunia).